A 325-amino-acid chain; its full sequence is MNLSAAHHQISLSDGNNIPLIGLGTYSDPRPVPGKTYVAVKTAIDEGYRHIDGAYVYHNEHEVGEAIREKIAEGKVKREEIFYCGKLWNTEHVPSMVLPALERTLKALKLDYIDLYIIELPMAFKPGKEIYPRDENGRIIYDKTNLCATWEALEACKDAGLVKSLGVSNFNRRQLELILNKPGLKYKPVTNQVECHPYFTQTKLLKFCQQHDIVIVAHSPLGTCRNPSWVNVSSPPLLNDELLTSLGKKYNKTQAQIVLRFNIQRGIVVIPKSFTPERIKENFQIFDFSLTEEEMKDIDALNKNVRYVELLMWSDHPEYPFHDEY.

NADP(+) is bound by residues 22 to 26 (GLGTY) and Asp52. Tyr26 provides a ligand contact to substrate. The substrate site is built by Tyr57, Trp88, Glu119, and Tyr131. Tyr57 (proton donor) is an active-site residue. NADP(+) is bound by residues 168–169 (SN), Gln192, and 218–223 (HSPLGT). Ser228 carries the phosphoserine modification. Residue Trp229 participates in substrate binding. Residue 272 to 282 (KSFTPERIKEN) coordinates NADP(+).

This sequence belongs to the aldo/keto reductase family.

The protein resides in the cytoplasm. The enzyme catalyses 5beta-cholestan-3-one + NADP(+) = cholest-4-en-3-one + NADPH + H(+). It carries out the reaction 4,5beta-dihydrocortisone + NADP(+) = cortisone + NADPH + H(+). It catalyses the reaction cortisol + NADPH + H(+) = 5beta-dihydrocortisol + NADP(+). The catalysed reaction is corticosterone + NADPH + H(+) = 5beta-dihydrocorticosterone + NADP(+). The enzyme catalyses 7alpha,12alpha-dihydroxycholest-4-en-3-one + NADPH + H(+) = 7alpha,12alpha-dihydroxy-5beta-cholestan-3-one + NADP(+). It carries out the reaction 7alpha-hydroxycholest-4-en-3-one + NADPH + H(+) = 7alpha-hydroxy-5beta-cholestan-3-one + NADP(+). It catalyses the reaction epitestosterone + NADPH + H(+) = 5beta-dihydroepitestosterone + NADP(+). The catalysed reaction is androst-4-ene-3,17-dione + NADPH + H(+) = 5beta-androstane-3,17-dione + NADP(+). The enzyme catalyses progesterone + NADPH + H(+) = 5beta-pregnan-3,20-dione + NADP(+). It carries out the reaction 21-hydroxyprogesterone + NADPH + H(+) = 5beta-dihydrodeoxycorticosterone + NADP(+). It catalyses the reaction aldosterone + NADPH + H(+) = 5beta-dihydroaldosterone + NADP(+). The catalysed reaction is 17beta-hydroxyandrosta-1,4-dien-3-one + NADPH + H(+) = 17beta-hydroxy-5beta-androst-1-en-3-one + NADP(+). The enzyme catalyses 17beta-hydroxyestr-4-en-3-one + NADPH + H(+) = 17beta-hydroxy-5beta-estran-3-one + NADP(+). It carries out the reaction 5beta-dihydrotestosterone + NADP(+) = testosterone + NADPH + H(+). It catalyses the reaction androst-4-ene-3,11,17-trione + NADPH + H(+) = 17beta-hydroxyandrost-4-ene-3,11-dione + NADP(+). Its activity is regulated as follows. Subject to inhibition by high substrate concentrations. Inhibited by testosterone concentrations above 10 uM. Inhibited by the primary and secondary bile acids chenodeoxycholic acid and ursodeoxycholic acid. Its function is as follows. Catalyzes the stereospecific NADPH-dependent reduction of the C4-C5 double bond of bile acid intermediates and steroid hormones carrying a delta(4)-3-one structure to yield an A/B cis-ring junction. This cis-configuration is crucial for bile acid biosynthesis and plays important roles in steroid metabolism. Capable of reducing a broad range of delta-(4)-3-ketosteroids from C18 (such as, 17beta-hydroxyestr-4-en-3-one) to C27 (such as, 7alpha-hydroxycholest-4-en-3-one). This chain is Aldo-keto reductase family 1 member D1 (Akr1d1), found in Mus musculus (Mouse).